We begin with the raw amino-acid sequence, 177 residues long: O-acetyl-ADP-ribose deacetylase (177 aa).

The Macro domain occupies 1–175 (MKSRIHVLQG…LYNRLLTQQG (175 aa)). Residues 11–12 (DI), asparagine 25, 33–35 (GVD), and 122–126 (STGVY) contribute to the substrate site. Aspartate 35 functions as the Proton acceptor in the catalytic mechanism.

The protein belongs to the MacroD-type family. YmdB subfamily. Homodimer. Interacts with RNase III.

It catalyses the reaction 3''-O-acetyl-ADP-D-ribose + H2O = ADP-D-ribose + acetate + H(+). The catalysed reaction is 2''-O-acetyl-ADP-D-ribose + H2O = ADP-D-ribose + acetate + H(+). In terms of biological role, deacetylates O-acetyl-ADP ribose to yield ADP-ribose and free acetate. Down-regulates ribonuclease 3 (RNase III) activity. Acts by interacting directly with the region of the ribonuclease that is required for dimerization/activation. The polypeptide is O-acetyl-ADP-ribose deacetylase (Escherichia fergusonii (strain ATCC 35469 / DSM 13698 / CCUG 18766 / IAM 14443 / JCM 21226 / LMG 7866 / NBRC 102419 / NCTC 12128 / CDC 0568-73)).